Here is a 431-residue protein sequence, read N- to C-terminus: Chaperone SurA (431 aa).

The N-terminal stretch at 1–22 (MNLKKLLTSAVLSISLCQSAFA) is a signal peptide. PpiC domains lie at 173-274 (AEEY…KVQD) and 283-383 (TTET…QLLD).

The protein localises to the periplasm. It carries out the reaction [protein]-peptidylproline (omega=180) = [protein]-peptidylproline (omega=0). Chaperone involved in the correct folding and assembly of outer membrane proteins. Recognizes specific patterns of aromatic residues and the orientation of their side chains, which are found more frequently in integral outer membrane proteins. May act in both early periplasmic and late outer membrane-associated steps of protein maturation. The polypeptide is Chaperone SurA (Pseudoalteromonas translucida (strain TAC 125)).